The primary structure comprises 172 residues: Protein nemuri (172 aa).

The first 25 residues, 1-25 (MSAKYTLIFALAALCCLVFSTEAAA), serve as a signal peptide directing secretion. Positions 27–172 (RSRVLSSRRG…KRRSGKGNKA (146 aa)) are disordered. 3 stretches are compositionally biased toward basic and acidic residues: residues 35-50 (RGSE…KEDS), 58-90 (DLER…DKET), and 97-108 (TIVKPNKDDARA). Positions 45–74 (DNKEDSELAAQEQDLERQEQEEQNDRLEGR) form a coiled coil. The segment covering 109–172 (RRIVRAGRRR…KRRSGKGNKA (64 aa)) has biased composition (basic residues).

In terms of tissue distribution, detected in the brain where it accumulates in the dorsal fan-shaped body following sleep deprivation (at protein level). Expressed in the adult body.

It localises to the secreted. Its function is as follows. Antimicrobial protein which is essential for the homeostatic regulation of sleep. Promotes sleep following sleep deprivation or bacterial infection and increases survival following bacterial infection. Likely to promote survival to bacterial infection in two ways; by contributing to the innate immune response and by promoting sleep during sickness to aid recovery. The polypeptide is Protein nemuri (Drosophila melanogaster (Fruit fly)).